The sequence spans 81 residues: uncharacterized protein (81 aa).

The signal sequence occupies residues 1-31; sequence MRYNSFLSVLALFNVLLWFTFILAISMTFSA. The chain crosses the membrane as a helical span at residues 52-74; that stretch reads WFFVLLPYVIGLFFAIFDSATIG.

Its subcellular location is the membrane. This is an uncharacterized protein from Pasteurella multocida (strain Pm70).